The chain runs to 1004 residues: Presequence protease, mitochondrial (1004 aa).

Residues 1–34 (MLRNAAAGARKAVTELSQFPKPGEKLHGFTLVRS) constitute a mitochondrion transit peptide. Histidine 84 serves as a coordination point for Zn(2+). The active-site Proton acceptor is the glutamate 87. A Zn(2+)-binding site is contributed by histidine 88. Residue glutamate 160 is part of the active site. Position 188 (glutamate 188) interacts with Zn(2+).

The protein belongs to the peptidase M16 family. PreP subfamily. As to quaternary structure, monomer and homodimer; homodimerization is induced by binding of the substrate. The cofactor is Zn(2+).

Its subcellular location is the mitochondrion intermembrane space. It localises to the mitochondrion matrix. In terms of biological role, degrades mitochondrial transit peptides after their cleavage in the intermembrane space or in the matrix, and presequence peptides; clearance of these peptides is required to keep the presequence processing machinery running. Preferentially cleaves the N-terminal side of paired basic amino acid residues. Also degrades other unstructured peptides. May function as an ATP-dependent peptidase as opposed to a metalloendopeptidase. The protein is Presequence protease, mitochondrial (CYM1) of Gibberella zeae (strain ATCC MYA-4620 / CBS 123657 / FGSC 9075 / NRRL 31084 / PH-1) (Wheat head blight fungus).